The sequence spans 123 residues: Small ribosomal subunit protein uS12cz/uS12cy (123 aa).

It belongs to the universal ribosomal protein uS12 family. Part of the 30S ribosomal subunit.

The protein localises to the plastid. It is found in the chloroplast. In terms of biological role, with S4 and S5 plays an important role in translational accuracy. Located at the interface of the 30S and 50S subunits. The sequence is that of Small ribosomal subunit protein uS12cz/uS12cy (rps12-A) from Nymphaea alba (White water-lily).